A 415-amino-acid chain; its full sequence is Serine hydroxymethyltransferase 2 (415 aa).

Residues L122 and G126–L128 contribute to the (6S)-5,6,7,8-tetrahydrofolate site. K230 is subject to N6-(pyridoxal phosphate)lysine.

This sequence belongs to the SHMT family. As to quaternary structure, homodimer. The cofactor is pyridoxal 5'-phosphate.

It localises to the cytoplasm. It carries out the reaction (6R)-5,10-methylene-5,6,7,8-tetrahydrofolate + glycine + H2O = (6S)-5,6,7,8-tetrahydrofolate + L-serine. Its pathway is one-carbon metabolism; tetrahydrofolate interconversion. The protein operates within amino-acid biosynthesis; glycine biosynthesis; glycine from L-serine: step 1/1. Its function is as follows. Catalyzes the reversible interconversion of serine and glycine with tetrahydrofolate (THF) serving as the one-carbon carrier. This reaction serves as the major source of one-carbon groups required for the biosynthesis of purines, thymidylate, methionine, and other important biomolecules. Also exhibits THF-independent aldolase activity toward beta-hydroxyamino acids, producing glycine and aldehydes, via a retro-aldol mechanism. This Burkholderia lata (strain ATCC 17760 / DSM 23089 / LMG 22485 / NCIMB 9086 / R18194 / 383) protein is Serine hydroxymethyltransferase 2.